The chain runs to 158 residues: Ethylene-responsive transcription factor ERF120 (158 aa).

Residues K86–E147 constitute a DNA-binding region (AP2/ERF). Residues V134 to N158 are disordered. The segment covering K144 to N158 has biased composition (basic and acidic residues).

The protein belongs to the AP2/ERF transcription factor family. ERF subfamily.

Its subcellular location is the nucleus. In terms of biological role, probably acts as a transcriptional activator. Binds to the GCC-box pathogenesis-related promoter element. May be involved in the regulation of gene expression by stress factors and by components of stress signal transduction pathways. This Arabidopsis thaliana (Mouse-ear cress) protein is Ethylene-responsive transcription factor ERF120 (ERF120).